The following is a 268-amino-acid chain: Undecaprenyl-diphosphatase (268 aa).

A run of 7 helical transmembrane segments spans residues 41–61 (LAYS…LIYF), 81–101 (WLTY…PLYM), 106–126 (YLLL…AVIF), 146–166 (MTLG…LPGI), 191–211 (FVLV…SEGG), 213–233 (VATP…LVTI), and 245–265 (VTLV…TRIL).

The protein belongs to the UppP family.

It is found in the cell membrane. It catalyses the reaction di-trans,octa-cis-undecaprenyl diphosphate + H2O = di-trans,octa-cis-undecaprenyl phosphate + phosphate + H(+). Catalyzes the dephosphorylation of undecaprenyl diphosphate (UPP). This Pyrobaculum islandicum (strain DSM 4184 / JCM 9189 / GEO3) protein is Undecaprenyl-diphosphatase.